Here is a 105-residue protein sequence, read N- to C-terminus: Acylphosphatase (105 aa).

One can recognise an Acylphosphatase-like domain in the interval 16-105 (RLTAWVRGRV…RGGYSGFTQA (90 aa)). Residues Arg-31 and Asn-49 contribute to the active site.

It belongs to the acylphosphatase family.

The enzyme catalyses an acyl phosphate + H2O = a carboxylate + phosphate + H(+). This is Acylphosphatase (acyP) from Acidothermus cellulolyticus (strain ATCC 43068 / DSM 8971 / 11B).